Consider the following 333-residue polypeptide: Adenosine deaminase (333 aa).

2 residues coordinate Zn(2+): His12 and His14. Substrate is bound by residues His14, Asp16, and Gly170. His197 lines the Zn(2+) pocket. The Proton donor role is filled by Glu200. Residue Asp278 participates in Zn(2+) binding. Residue Asp279 participates in substrate binding.

This sequence belongs to the metallo-dependent hydrolases superfamily. Adenosine and AMP deaminases family. Adenosine deaminase subfamily. Zn(2+) serves as cofactor.

The enzyme catalyses adenosine + H2O + H(+) = inosine + NH4(+). It carries out the reaction 2'-deoxyadenosine + H2O + H(+) = 2'-deoxyinosine + NH4(+). Its function is as follows. Catalyzes the hydrolytic deamination of adenosine and 2-deoxyadenosine. This is Adenosine deaminase from Shigella sonnei (strain Ss046).